A 427-amino-acid chain; its full sequence is Kallistatin (427 aa).

Positions 1–20 (MHLIDYLLLLLVGLLALSHG) are cleaved as a signal peptide. N-linked (GlcNAc...) asparagine glycosylation is found at asparagine 33, asparagine 108, and asparagine 157. Asparagine 238 carries an N-linked (GlcNAc...) (complex) asparagine glycan.

The protein belongs to the serpin family. In terms of assembly, monomer and some homodimers. In terms of processing, the N-terminus is blocked. As to expression, expressed by the liver and secreted in plasma.

Its subcellular location is the secreted. Functionally, inhibits human amidolytic and kininogenase activities of tissue kallikrein. Inhibition is achieved by formation of an equimolar, heat- and SDS-stable complex between the inhibitor and the enzyme, and generation of a small C-terminal fragment of the inhibitor due to cleavage at the reactive site by tissue kallikrein. This chain is Kallistatin (SERPINA4), found in Homo sapiens (Human).